Reading from the N-terminus, the 878-residue chain is Protein translocase subunit SecA (878 aa).

Residues Gln79, 97 to 101, and Asp487 each bind ATP; that span reads GEGKT.

The protein belongs to the SecA family.

The protein resides in the plastid. It is found in the chloroplast stroma. It localises to the chloroplast thylakoid membrane. It carries out the reaction ATP + H2O + cellular proteinSide 1 = ADP + phosphate + cellular proteinSide 2.. Has a central role in coupling the hydrolysis of ATP to the transfer of proteins across the thylakoid membrane. This Antithamnion sp. (Red alga) protein is Protein translocase subunit SecA.